The sequence spans 154 residues: Transcriptional repressor NrdR (154 aa).

A zinc finger spans residues 3-34 (CPHCHKNGSRVVDSRPSEDGSFIRRRRECIHC). One can recognise an ATP-cone domain in the interval 49 to 139 (LLVIKKDGTR…VYRQFKDVDA (91 aa)).

This sequence belongs to the NrdR family. It depends on Zn(2+) as a cofactor.

In terms of biological role, negatively regulates transcription of bacterial ribonucleotide reductase nrd genes and operons by binding to NrdR-boxes. The protein is Transcriptional repressor NrdR of Limosilactobacillus reuteri (strain DSM 20016) (Lactobacillus reuteri).